The primary structure comprises 1913 residues: GREB1-like protein (1913 aa).

Residues 86–96 (MEDDEDEEEMS) are compositionally biased toward acidic residues. 4 disordered regions span residues 86 to 111 (MEDD…KPAP), 281 to 309 (NGTS…SPRP), 1097 to 1157 (EAER…TSSI), and 1179 to 1207 (DSLD…LAWS). The span at 289–301 (KSSSCSSTPSRPG) shows a compositional bias: low complexity. The segment covering 1118 to 1157 (PQSNSSAVTGTSGSIMENGVSSSSTAGKPQQQLLTPTSSI) has biased composition (polar residues). Positions 1187–1200 (SSTTSKPSSSSSSS) are enriched in low complexity. Residues 1832-1852 (GVFFSGLLLYLCDSFVGADLL) form a helical membrane-spanning segment.

It belongs to the GREB1 family. Expressed in the inner ear, with a high presence in the spiral ganglia, cochlear nerve bundles, and hair cells.

The protein resides in the membrane. Functionally, plays a major role in early metanephros and genital development. The polypeptide is GREB1-like protein (Greb1l) (Mus musculus (Mouse)).